Consider the following 327-residue polypeptide: uncharacterized protein (327 aa).

An N-terminal signal peptide occupies residues Met-1–Gly-24.

This is an uncharacterized protein from Salmonella typhimurium (strain LT2 / SGSC1412 / ATCC 700720).